The chain runs to 403 residues: D-mannonate dehydratase (403 aa).

Substrate is bound by residues asparagine 38 and histidine 123. The active-site Proton donor/acceptor is the tyrosine 160. Aspartate 211 is a Mg(2+) binding site. The active-site Proton donor/acceptor is histidine 213. Mg(2+) is bound by residues glutamate 237 and glutamate 263. The substrate site is built by glutamate 263, arginine 284, histidine 313, aspartate 317, and glutamate 340.

Belongs to the mandelate racemase/muconate lactonizing enzyme family. GalD subfamily. The cofactor is Mg(2+).

It catalyses the reaction D-mannonate = 2-dehydro-3-deoxy-D-gluconate + H2O. The protein operates within carbohydrate metabolism; pentose and glucuronate interconversion. Catalyzes the dehydration of D-mannonate. Has no detectable activity with a panel of 70 other acid sugars (in vitro). This Sphingomonas sp. (strain SKA58) protein is D-mannonate dehydratase.